Consider the following 101-residue polypeptide: Small ribosomal subunit protein uS14 (101 aa).

This sequence belongs to the universal ribosomal protein uS14 family. Part of the 30S ribosomal subunit. Contacts proteins S3 and S10.

In terms of biological role, binds 16S rRNA, required for the assembly of 30S particles and may also be responsible for determining the conformation of the 16S rRNA at the A site. This Proteus mirabilis (strain HI4320) protein is Small ribosomal subunit protein uS14.